The sequence spans 319 residues: Movement protein (319 aa).

Positions 1–20 (MNSSVEKQNSEIPEKENEEF) are disordered. Positions 289 to 319 (KETSPSSSHQKSLEEISDKIDTLVVKLNNIS) form a coiled coil.

It belongs to the caulimoviridae movement protein family. In terms of assembly, homotrimer, through the coiled-coil domain. Interacts with VAP.

It is found in the host cell junction. The protein localises to the host plasmodesma. Its function is as follows. Transports viral genome to neighboring plant cells directly through plasmosdesmata, without any budding. The movement protein allows efficient cell to cell propagation, by bypassing the host cell wall barrier. Acts by forming tubules structures that increase the size exclusion limit (SEL) of plasmodesmata, thereby allowing viral ribonucleocapsids to spread directly to neighboring cells. This Dianthus caryophyllus (Carnation) protein is Movement protein.